The sequence spans 666 residues: Transketolase (666 aa).

His-28 serves as a coordination point for substrate. Residues His-68 and 116 to 118 each bind thiamine diphosphate; that span reads GPL. Asp-157 contacts Mg(2+). 2 residues coordinate thiamine diphosphate: Gly-158 and Asn-187. The Mg(2+) site is built by Asn-187 and Ile-189. 3 residues coordinate substrate: His-262, Arg-356, and Ser-383. Residue His-262 participates in thiamine diphosphate binding. The Proton donor role is filled by Glu-410. Phe-436 provides a ligand contact to thiamine diphosphate. Residues His-460, Asp-468, and Arg-519 each contribute to the substrate site.

It belongs to the transketolase family. In terms of assembly, homodimer. It depends on Mg(2+) as a cofactor. The cofactor is Ca(2+). Requires Mn(2+) as cofactor. Co(2+) serves as cofactor. Thiamine diphosphate is required as a cofactor.

The enzyme catalyses D-sedoheptulose 7-phosphate + D-glyceraldehyde 3-phosphate = aldehydo-D-ribose 5-phosphate + D-xylulose 5-phosphate. Functionally, catalyzes the transfer of a two-carbon ketol group from a ketose donor to an aldose acceptor, via a covalent intermediate with the cofactor thiamine pyrophosphate. The chain is Transketolase (tkt) from Halalkalibacterium halodurans (strain ATCC BAA-125 / DSM 18197 / FERM 7344 / JCM 9153 / C-125) (Bacillus halodurans).